We begin with the raw amino-acid sequence, 235 residues long: Phosphoribosylaminoimidazole-succinocarboxamide synthase (235 aa).

It belongs to the SAICAR synthetase family.

The enzyme catalyses 5-amino-1-(5-phospho-D-ribosyl)imidazole-4-carboxylate + L-aspartate + ATP = (2S)-2-[5-amino-1-(5-phospho-beta-D-ribosyl)imidazole-4-carboxamido]succinate + ADP + phosphate + 2 H(+). It participates in purine metabolism; IMP biosynthesis via de novo pathway; 5-amino-1-(5-phospho-D-ribosyl)imidazole-4-carboxamide from 5-amino-1-(5-phospho-D-ribosyl)imidazole-4-carboxylate: step 1/2. This is Phosphoribosylaminoimidazole-succinocarboxamide synthase from Clostridium beijerinckii (strain ATCC 51743 / NCIMB 8052) (Clostridium acetobutylicum).